A 225-amino-acid polypeptide reads, in one-letter code: UPF0758 protein Shew_3481 (225 aa).

The MPN domain maps to 102-224 (ILSDPDLTRD…IVSFAERGWI (123 aa)). Zn(2+) contacts are provided by H173, H175, and D186. Positions 173–186 (HNHPSGGAEPSHAD) match the JAMM motif motif.

Belongs to the UPF0758 family.

This is UPF0758 protein Shew_3481 from Shewanella loihica (strain ATCC BAA-1088 / PV-4).